A 174-amino-acid chain; its full sequence is Bifunctional protein PyrR (174 aa).

Residues 38-39 (SG), 95-103 (DDVLATGRT), and R128 contribute to the substrate site. The PRPP-binding motif lies at 91–103 (ILLVDDVLATGRT).

This sequence belongs to the purine/pyrimidine phosphoribosyltransferase family. PyrR subfamily.

The enzyme catalyses UMP + diphosphate = 5-phospho-alpha-D-ribose 1-diphosphate + uracil. Functionally, regulates the transcription of the pyrimidine nucleotide (pyr) operon in response to exogenous pyrimidines. Also displays a weak uracil phosphoribosyltransferase activity which is not physiologically significant. This is Bifunctional protein PyrR from Ralstonia nicotianae (strain ATCC BAA-1114 / GMI1000) (Ralstonia solanacearum).